Here is a 274-residue protein sequence, read N- to C-terminus: NH(3)-dependent NAD(+) synthetase (274 aa).

46–53 (GISGGQDS) serves as a coordination point for ATP. Position 52 (D52) interacts with Mg(2+). R140 is a binding site for deamido-NAD(+). An ATP-binding site is contributed by T160. E165 is a Mg(2+) binding site. Deamido-NAD(+) contacts are provided by K173 and D180. ATP contacts are provided by K189 and T211. 260 to 261 (HK) provides a ligand contact to deamido-NAD(+).

Belongs to the NAD synthetase family. As to quaternary structure, homodimer.

The enzyme catalyses deamido-NAD(+) + NH4(+) + ATP = AMP + diphosphate + NAD(+) + H(+). It participates in cofactor biosynthesis; NAD(+) biosynthesis; NAD(+) from deamido-NAD(+) (ammonia route): step 1/1. Functionally, catalyzes the ATP-dependent amidation of deamido-NAD to form NAD. Uses ammonia as a nitrogen source. This Streptococcus uberis (strain ATCC BAA-854 / 0140J) protein is NH(3)-dependent NAD(+) synthetase.